Consider the following 274-residue polypeptide: Nitrogenase iron protein (274 aa).

8–15 (GKGGIGKS) serves as a coordination point for ATP. C94 contributes to the [4Fe-4S] cluster binding site. R97 is subject to ADP-ribosylarginine; by dinitrogenase reductase ADP-ribosyltransferase. C131 contributes to the [4Fe-4S] cluster binding site.

Belongs to the NifH/BchL/ChlL family. As to quaternary structure, homodimer. [4Fe-4S] cluster is required as a cofactor. In terms of processing, the reversible ADP-ribosylation of Arg-97 inactivates the nitrogenase reductase and regulates nitrogenase activity.

The catalysed reaction is N2 + 8 reduced [2Fe-2S]-[ferredoxin] + 16 ATP + 16 H2O = H2 + 8 oxidized [2Fe-2S]-[ferredoxin] + 2 NH4(+) + 16 ADP + 16 phosphate + 6 H(+). Functionally, the key enzymatic reactions in nitrogen fixation are catalyzed by the nitrogenase complex, which has 2 components: the iron protein and the molybdenum-iron protein. The polypeptide is Nitrogenase iron protein (Prosthecochloris aestuarii (strain DSM 271 / SK 413)).